The primary structure comprises 152 residues: 3-dehydroquinate dehydratase (152 aa).

Y26 functions as the Proton acceptor in the catalytic mechanism. Residues N78, H84, and D91 each coordinate substrate. H104 (proton donor) is an active-site residue. Substrate is bound by residues 105-106 and R115; that span reads IS.

The protein belongs to the type-II 3-dehydroquinase family. As to quaternary structure, homododecamer.

It carries out the reaction 3-dehydroquinate = 3-dehydroshikimate + H2O. It participates in metabolic intermediate biosynthesis; chorismate biosynthesis; chorismate from D-erythrose 4-phosphate and phosphoenolpyruvate: step 3/7. Functionally, catalyzes a trans-dehydration via an enolate intermediate. In Buchnera aphidicola subsp. Cinara cedri (strain Cc), this protein is 3-dehydroquinate dehydratase.